Consider the following 151-residue polypeptide: Large ribosomal subunit protein bL9 (151 aa).

It belongs to the bacterial ribosomal protein bL9 family.

Binds to the 23S rRNA. The sequence is that of Large ribosomal subunit protein bL9 from Rhodococcus opacus (strain B4).